A 143-amino-acid polypeptide reads, in one-letter code: Histone H2B.2, sperm (143 aa).

The disordered stretch occupies residues 1 to 52 (MPRSPSKSSPRKGSPRKGSPRKGSPKRGGKGAKRAGKGGRRRNVVKRRRRRR). 5 short sequence motifs (SPKK motif) span residues 4 to 7 (SPSK), 9 to 12 (SPRK), 14 to 17 (SPRK), 19 to 22 (SPRK), and 24 to 27 (SPKR). Positions 9-52 (SPRKGSPRKGSPRKGSPKRGGKGAKRAGKGGRRRNVVKRRRRRR) are enriched in basic residues. Residues S14, S19, and S24 each carry the phosphoserine modification. The O-linked (GlcNAc) serine glycan is linked to S130. A Glycyl lysine isopeptide (Lys-Gly) (interchain with G-Cter in ubiquitin) cross-link involves residue K138.

It belongs to the histone H2B family. As to quaternary structure, the nucleosome is a histone octamer containing two molecules each of H2A, H2B, H3 and H4 assembled in one H3-H4 heterotetramer and two H2A-H2B heterodimers. The octamer wraps approximately 147 bp of DNA. In terms of processing, monoubiquitination of Lys-138 gives a specific tag for epigenetic transcriptional activation and is also prerequisite for histone H3 'Lys-4' and 'Lys-79' methylation. Phosphorylated on SPKK motifs 3, 4 and 5; which may regulate DNA binding. Dephosphorylated during maturation of spermatids to mature sperm and rephosphorylated at fertilization. Post-translationally, glcNAcylation at Ser-130 promotes monoubiquitination of Lys-138. It fluctuates in response to extracellular glucose, and associates with transcribed genes. Testis-specific.

It localises to the nucleus. The protein localises to the chromosome. Core component of nucleosome. Nucleosomes wrap and compact DNA into chromatin, limiting DNA accessibility to the cellular machineries which require DNA as a template. Histones thereby play a central role in transcription regulation, DNA repair, DNA replication and chromosomal stability. DNA accessibility is regulated via a complex set of post-translational modifications of histones, also called histone code, and nucleosome remodeling. This chain is Histone H2B.2, sperm, found in Lytechinus pictus (Painted sea urchin).